The following is a 156-amino-acid chain: Ribosomal RNA large subunit methyltransferase H (156 aa).

Residues L73, G104, and 123–128 (LSPLTL) contribute to the S-adenosyl-L-methionine site.

The protein belongs to the RNA methyltransferase RlmH family. Homodimer.

It localises to the cytoplasm. It catalyses the reaction pseudouridine(1915) in 23S rRNA + S-adenosyl-L-methionine = N(3)-methylpseudouridine(1915) in 23S rRNA + S-adenosyl-L-homocysteine + H(+). Its function is as follows. Specifically methylates the pseudouridine at position 1915 (m3Psi1915) in 23S rRNA. The protein is Ribosomal RNA large subunit methyltransferase H of Sodalis glossinidius (strain morsitans).